Consider the following 392-residue polypeptide: MNIHEYQGKDILRKFGVAVPRGIVAYSPEEAKQAAEQLFDELGCPVVVIKAQIHAGGRGKAGGVKLAKSPEESLDIAHQLIGMTLITHQTGPEGKEVRRVLVEEGMNIEKEFYVGITLDRSTSKNVLMVSTEGGMEIEKVAEETPERLLKIQIDPLFGMQGFQAREAAFFLGLKGEQFRNAVNFITALYNAYISIDAALAEINPLVVTKEGKVLALDAKINFDDNALFRHKEFHELRDTNEEDPFEVEASKSNLNYVRLDGNVGCMVNGAGLAMGTMDMIQLAGGKPANFLDVGGSASPQTVEEGFKIILSDKNVKAILVNIFGGIVRCDRVAGGIIEAAKKIDLHLPVIVRLEGTNAPIAQKMLDDSGLNLIAAKGLRDAAQKVQEALAAS.

The ATP-grasp domain maps to 9-248 (KDILRKFGVA…TNEEDPFEVE (240 aa)). ATP-binding positions include Lys-50, 57 to 59 (GRG), Glu-103, Met-106, and Glu-111. Positions 203 and 217 each coordinate Mg(2+). Substrate is bound by residues Asn-268 and 325–327 (GIV).

Belongs to the succinate/malate CoA ligase beta subunit family. As to quaternary structure, heterotetramer of two alpha and two beta subunits. Mg(2+) serves as cofactor.

It catalyses the reaction succinate + ATP + CoA = succinyl-CoA + ADP + phosphate. It carries out the reaction GTP + succinate + CoA = succinyl-CoA + GDP + phosphate. It functions in the pathway carbohydrate metabolism; tricarboxylic acid cycle; succinate from succinyl-CoA (ligase route): step 1/1. Succinyl-CoA synthetase functions in the citric acid cycle (TCA), coupling the hydrolysis of succinyl-CoA to the synthesis of either ATP or GTP and thus represents the only step of substrate-level phosphorylation in the TCA. The beta subunit provides nucleotide specificity of the enzyme and binds the substrate succinate, while the binding sites for coenzyme A and phosphate are found in the alpha subunit. This Pelodictyon phaeoclathratiforme (strain DSM 5477 / BU-1) protein is Succinate--CoA ligase [ADP-forming] subunit beta.